The following is a 318-amino-acid chain: NADH-ubiquinone oxidoreductase chain 1 (318 aa).

Transmembrane regions (helical) follow at residues 3–23 (LITL…LTLV), 70–90 (MFII…TPLP), 100–120 (LGIL…LWSG), 146–166 (LAII…TTLI), 171–191 (YIWL…STLA), 222–242 (LFFL…TILF), 254–273 (LYTT…FLWI), and 294–314 (LPLT…LASI).

This sequence belongs to the complex I subunit 1 family.

Its subcellular location is the mitochondrion inner membrane. The catalysed reaction is a ubiquinone + NADH + 5 H(+)(in) = a ubiquinol + NAD(+) + 4 H(+)(out). In terms of biological role, core subunit of the mitochondrial membrane respiratory chain NADH dehydrogenase (Complex I) that is believed to belong to the minimal assembly required for catalysis. Complex I functions in the transfer of electrons from NADH to the respiratory chain. The immediate electron acceptor for the enzyme is believed to be ubiquinone. This is NADH-ubiquinone oxidoreductase chain 1 (MT-ND1) from Phyllostomus elongatus (Lesser spear-nosed bat).